The following is a 124-amino-acid chain: ATP synthase epsilon chain (124 aa).

It belongs to the ATPase epsilon chain family. In terms of assembly, F-type ATPases have 2 components, CF(1) - the catalytic core - and CF(0) - the membrane proton channel. CF(1) has five subunits: alpha(3), beta(3), gamma(1), delta(1), epsilon(1). CF(0) has three main subunits: a, b and c.

The protein localises to the cell membrane. Functionally, produces ATP from ADP in the presence of a proton gradient across the membrane. The chain is ATP synthase epsilon chain from Streptomyces avermitilis (strain ATCC 31267 / DSM 46492 / JCM 5070 / NBRC 14893 / NCIMB 12804 / NRRL 8165 / MA-4680).